The following is a 463-amino-acid chain: Quinolone resistance protein NorB (463 aa).

14 helical membrane passes run 17-37, 53-73, 86-106, 107-127, 142-162, 165-185, 201-221, 230-250, 273-293, 299-319, 334-354, 357-377, 403-423, and 435-455; these read IGIV…VNVV, IAVS…GGLA, IILN…LLLI, IGRL…LSII, YWSI…GAVA, LGWR…LFLI, FDIK…ILIT, SLLF…FIVL, TASN…NTFV, YSSL…LIMI, PMLI…LTFL, ILYV…LGIY, MASA…YAIV, and IALW…LLLV.

The protein belongs to the major facilitator superfamily. TCR/Tet family.

It is found in the cell membrane. Multidrug efflux pump that acts independently of NorA and is one of the factors that confers resistance against diverse quinolones and chemical compounds. This is Quinolone resistance protein NorB (norB) from Staphylococcus aureus (strain MSSA476).